Reading from the N-terminus, the 62-residue chain is Large ribosomal subunit protein bL28 (62 aa).

It belongs to the bacterial ribosomal protein bL28 family.

This Acholeplasma laidlawii (strain PG-8A) protein is Large ribosomal subunit protein bL28.